The chain runs to 312 residues: Porphobilinogen deaminase (312 aa).

Position 241 is an S-(dipyrrolylmethanemethyl)cysteine (cysteine 241).

It belongs to the HMBS family. Monomer. It depends on dipyrromethane as a cofactor.

The catalysed reaction is 4 porphobilinogen + H2O = hydroxymethylbilane + 4 NH4(+). It functions in the pathway porphyrin-containing compound metabolism; protoporphyrin-IX biosynthesis; coproporphyrinogen-III from 5-aminolevulinate: step 2/4. The protein operates within porphyrin-containing compound metabolism; chlorophyll biosynthesis. Functionally, tetrapolymerization of the monopyrrole PBG into the hydroxymethylbilane pre-uroporphyrinogen in several discrete steps. This chain is Porphobilinogen deaminase, found in Prosthecochloris aestuarii (strain DSM 271 / SK 413).